A 90-amino-acid polypeptide reads, in one-letter code: Progonadoliberin-3 (90 aa).

A signal peptide spans methionine 1–serine 23. Pyrrolidone carboxylic acid is present on glutamine 24. Position 33 is a glycine amide (glycine 33).

It belongs to the GnRH family.

The protein localises to the secreted. Functionally, stimulates the secretion of gonadotropins. This chain is Progonadoliberin-3 (gnrh3), found in Sparus aurata (Gilthead sea bream).